Consider the following 34-residue polypeptide: Sarcoplasmic/endoplasmic reticulum calcium ATPase regulator DWORF (34 aa).

A helical membrane pass occupies residues 12–32 (IVPILLLVGWIVGCIIVIYIV).

Homooligomer. Can also form heterooligomers with other sarcoplasmic/endoplasmic reticulum calcium ATPase (SERCA) regulators ARLN, ERLN, PLN and SLN. Monomer. Interacts with ATP2A1/SERCA1; the interaction results in activation of ATP2A1. Interacts as a monomer with ATP2A2/SERCA2; the interaction results in activation of ATP2A2. In terms of tissue distribution, highly expressed in heart (at protein level). Detected in heart and soleus, a postural muscle group of the hindlimb containing the highest enrichment of slow-twitch muscle fibers. Also expressed in diaphragm, which contains some slow-twitch fibers. Not detected in the quadriceps, a fast-twitch muscle group, or in cardiac atrial muscle. Not expressed in the prenatal heart but gradually increases in abundance postnatally.

Its subcellular location is the sarcoplasmic reticulum membrane. Its function is as follows. Enhances the activity of ATP2A1/SERCA1 ATPase in sarcoplasmic reticulum by displacing ATP2A1/SERCA1 inhibitors, thereby acting as a key regulator of skeletal muscle activity. Also enhances the activity of the ATP2A2/SERCA2 ATPase. Does not directly stimulate SERCA pump activity. Binds preferentially to the phosphorylated E1 and E2 conformational forms of ATP2A2 which predominate at high Ca(2+) concentrations during the systolic phase of the cardiac cycle. Competes with ATP2A2 inhibitor phospholamban (PLN) for binding to ATP2A2 and displaces PLN. Can activate ATP2A2 directly in the absence of PLN. Also enhances sarcoplasmic reticulum Ca(2+) uptake and myocyte contractility by displacing the SERCA inhibitory peptides sarcolipin (SLN) and myoregulin (MRLN). The polypeptide is Sarcoplasmic/endoplasmic reticulum calcium ATPase regulator DWORF (Mus musculus (Mouse)).